A 907-amino-acid chain; its full sequence is MLGKLLTKLFGSRNDRTLKNLGKIVTQINALEADFQKLSDDELKAKTLEFRERLEKGETLDDIMAEAFATVREASVRVFEMRPFDVQLLGGMVLNSNRIAEMRTGEGKTLTATLPAYLNGLSGKGVHVITVNDYLAGRDAENNRPLFEFLGLTVGINVAGIGQAEKKMAYAADITYGTNNEFGFDYLRDNMAFSPQERVQRPLHYALIDEVDSILIDEARTPLIISGAAEDSSEHYRKVNVLIPSLIRQEKEDTEDEVGEGDYSIDEKGKQVHLTERGQEKVELLLIESGMLAEGDSLYSAANISLLHHVNAALRAHTLFEKDVDYIVQDNEVIIVDEHTGRTMPGRRWSEGLHQAVEAKEGVHIQNENQTLASITFQNYFRQYEKLAGMTGTADTEAFEFQHIYGLDTVVVPTNKPMVRNDMADLVYLTASEKYAAIIKDVEGCRERGQPVLVGTVSIEQSELLASLLKNAKIPHSVLNAKFHEKEAEIVAQAGRTGAVTIATNMAGRGTDIVLGGNWKVEIENLTNPTDEQIAKIRADWQIHHDAVIAAGGLHILGTERHESRRIDNQLRGRSGRQGDAGSSRFYLSMEDSLMRIFASERVSGMMKKLGMEEGEAIEHPWVSRAIENAQRKVEARNFDIRKQLLEYDDVANDQRQVVYSQRNELMDATSIQDTIKNIEADVINDLVDQYIPRQSLEELWDVPGLEQRFHQEFGIQLPIQQWLEKEEDLHEETLRERIVASWSDAYQAKEAMVGADVLRQFEKAVMLQTLDGLWKEHLAAMDHLRQGIHLRGYAQKNPKQEYKRESFELFQQMLDSLKHDVISVLSKVQVQAQSDVDDMEQRRREEEAKIQRDYQHAAAEALTDESQASSDNTPKTMIREGDKVGRNDPCPCGSGKKYKQCHGKLS.

ATP is bound by residues glutamine 87, 105-109 (GEGKT), and aspartate 512. The segment at 834–907 (QSDVDDMEQR…KYKQCHGKLS (74 aa)) is disordered. Basic and acidic residues predominate over residues 840–856 (MEQRRREEEAKIQRDYQ). Over residues 865–876 (DESQASSDNTPK) the composition is skewed to polar residues. Positions 878-887 (MIREGDKVGR) are enriched in basic and acidic residues. Zn(2+)-binding residues include cysteine 891, cysteine 893, cysteine 902, and histidine 903. Basic residues predominate over residues 897–907 (KKYKQCHGKLS).

It belongs to the SecA family. As to quaternary structure, monomer and homodimer. Part of the essential Sec protein translocation apparatus which comprises SecA, SecYEG and auxiliary proteins SecDF-YajC and YidC. It depends on Zn(2+) as a cofactor.

Its subcellular location is the cell inner membrane. It is found in the cytoplasm. The enzyme catalyses ATP + H2O + cellular proteinSide 1 = ADP + phosphate + cellular proteinSide 2.. Its function is as follows. Part of the Sec protein translocase complex. Interacts with the SecYEG preprotein conducting channel. Has a central role in coupling the hydrolysis of ATP to the transfer of proteins into and across the cell membrane, serving both as a receptor for the preprotein-SecB complex and as an ATP-driven molecular motor driving the stepwise translocation of polypeptide chains across the membrane. This Shewanella denitrificans (strain OS217 / ATCC BAA-1090 / DSM 15013) protein is Protein translocase subunit SecA.